Consider the following 610-residue polypeptide: Elongation factor 4 (610 aa).

The 183-residue stretch at 11–193 folds into the tr-type G domain; the sequence is ENIRNFSIIA…QIVEKVPAPS (183 aa). GTP is bound by residues 23 to 28 and 140 to 143; these read DHGKST and NKID.

This sequence belongs to the TRAFAC class translation factor GTPase superfamily. Classic translation factor GTPase family. LepA subfamily.

The protein resides in the cell membrane. It catalyses the reaction GTP + H2O = GDP + phosphate + H(+). Required for accurate and efficient protein synthesis under certain stress conditions. May act as a fidelity factor of the translation reaction, by catalyzing a one-codon backward translocation of tRNAs on improperly translocated ribosomes. Back-translocation proceeds from a post-translocation (POST) complex to a pre-translocation (PRE) complex, thus giving elongation factor G a second chance to translocate the tRNAs correctly. Binds to ribosomes in a GTP-dependent manner. In Streptococcus equi subsp. zooepidemicus (strain MGCS10565), this protein is Elongation factor 4.